The primary structure comprises 220 residues: MAMVTTEAAAAATTAATAAAEKPQDVEKPDYAPYNGASTTADGGTGARARRGDGGGGVVDSVVARWRREDMLDKSPLALHAAAAIFAFVALVLVASNQHGDWMQFDRYQEYRYLLAIASLALLYSLAQAARHAHRMRGGVDPVSSASARLLDFVGDQVVAYLLMSALSAAVPITNRMRSAVVNNFTDATAAAISMAFFSFVALALSAVVSGYKLSKQTYM.

Over 1-74 the chain is Cytoplasmic; the sequence is MAMVTTEAAA…RWRREDMLDK (74 aa). The disordered stretch occupies residues 13–56; it reads TTAATAAAEKPQDVEKPDYAPYNGASTTADGGTGARARRGDGGG. A helical membrane pass occupies residues 75–95; the sequence is SPLALHAAAAIFAFVALVLVA. At 96 to 109 the chain is on the extracellular side; sequence SNQHGDWMQFDRYQ. Residues 110–127 form a helical membrane-spanning segment; that stretch reads EYRYLLAIASLALLYSLA. The Cytoplasmic segment spans residues 128–152; the sequence is QAARHAHRMRGGVDPVSSASARLLD. The chain crosses the membrane as a helical span at residues 153-173; it reads FVGDQVVAYLLMSALSAAVPI. At 174 to 188 the chain is on the extracellular side; that stretch reads TNRMRSAVVNNFTDA. A glycan (N-linked (GlcNAc...) asparagine) is linked at Asn184. A helical transmembrane segment spans residues 189–209; it reads TAAAISMAFFSFVALALSAVV. The Cytoplasmic segment spans residues 210–220; the sequence is SGYKLSKQTYM.

The protein belongs to the Casparian strip membrane proteins (CASP) family. As to quaternary structure, homodimer and heterodimers.

It localises to the cell membrane. This is CASP-like protein 4B1 from Sorghum bicolor (Sorghum).